Here is a 369-residue protein sequence, read N- to C-terminus: Phenylalanine--tRNA ligase alpha subunit (369 aa).

Residue glutamate 269 coordinates Mg(2+).

Belongs to the class-II aminoacyl-tRNA synthetase family. Phe-tRNA synthetase alpha subunit type 1 subfamily. As to quaternary structure, tetramer of two alpha and two beta subunits. The cofactor is Mg(2+).

It localises to the cytoplasm. The enzyme catalyses tRNA(Phe) + L-phenylalanine + ATP = L-phenylalanyl-tRNA(Phe) + AMP + diphosphate + H(+). This chain is Phenylalanine--tRNA ligase alpha subunit, found in Brucella anthropi (strain ATCC 49188 / DSM 6882 / CCUG 24695 / JCM 21032 / LMG 3331 / NBRC 15819 / NCTC 12168 / Alc 37) (Ochrobactrum anthropi).